The chain runs to 508 residues: MTKRALISVSNKDGILEFAKELVALGYEILSTGGTKKMLQDNAVAVTAVDEVTKFPEILDGRVKTLNPMIHGGLLGKFDDDSHQAQMNEHGIEPIEIVCVNLYPFVETISKPNVTWDDAIENIDIGGPTMLRSAAKNHQYVTVIVDSNDYATVLEELKAGGATTIETRRKLAAKVFRHTAAYDSYISNYLTEEEFPESLTMTYELKQNLRYGENPHQKAAFYQKRLGSDFSLAYATQLHGKELSYNNIQDGNAALQIVKEFEMPAAVAVKHMNPCGVGTGVTLEEAFDKAYEADPTSIFGGIIALNMEVDAATAEKLSHIFLEIIIAPAFSQEALDILTKKKNIRLLTIPFEQAKQDQFNVVSVEGGLLVQEPDRYGFANADIKVVTDREPTKQEWEALQLGWSVVKHVKSNAIVVTDSQMTLGVGAGQMNRVGAAKIAFEQAGEKAKGAALASDAFFPMSDTVEAAAAAGITAIIQPGGSIKDQDSIDKANEYGITMIFTGVRHFKH.

Positions 1-145 constitute an MGS-like domain; the sequence is MTKRALISVS…KNHQYVTVIV (145 aa).

This sequence belongs to the PurH family.

The enzyme catalyses (6R)-10-formyltetrahydrofolate + 5-amino-1-(5-phospho-beta-D-ribosyl)imidazole-4-carboxamide = 5-formamido-1-(5-phospho-D-ribosyl)imidazole-4-carboxamide + (6S)-5,6,7,8-tetrahydrofolate. The catalysed reaction is IMP + H2O = 5-formamido-1-(5-phospho-D-ribosyl)imidazole-4-carboxamide. It participates in purine metabolism; IMP biosynthesis via de novo pathway; 5-formamido-1-(5-phospho-D-ribosyl)imidazole-4-carboxamide from 5-amino-1-(5-phospho-D-ribosyl)imidazole-4-carboxamide (10-formyl THF route): step 1/1. It functions in the pathway purine metabolism; IMP biosynthesis via de novo pathway; IMP from 5-formamido-1-(5-phospho-D-ribosyl)imidazole-4-carboxamide: step 1/1. In Lysinibacillus sphaericus (strain C3-41), this protein is Bifunctional purine biosynthesis protein PurH.